We begin with the raw amino-acid sequence, 351 residues long: Flagellin (351 aa).

This sequence belongs to the bacterial flagellin family.

Its subcellular location is the secreted. It localises to the bacterial flagellum. Flagellin is the subunit protein which polymerizes to form the filaments of bacterial flagella. The protein is Flagellin (fliC) of Serratia marcescens.